Consider the following 360-residue polypeptide: Photosystem II protein D1 2 (360 aa).

The next 3 membrane-spanning stretches (helical) occupy residues 29–46 (YIGW…AATT), 118–133 (HFLT…EWEL), and 142–156 (WICL…AATA). Residue His-118 participates in chlorophyll a binding. Tyr-126 contacts pheophytin a. [CaMn4O5] cluster is bound by residues Asp-170 and Glu-189. Residues 197–218 (FHMLGVAGVFGGSLFSAMHGSL) form a helical membrane-spanning segment. His-198 is a chlorophyll a binding site. A quinone is bound by residues His-215 and 264–265 (SF). Residue His-215 coordinates Fe cation. A Fe cation-binding site is contributed by His-272. The chain crosses the membrane as a helical span at residues 274–288 (FLAAWPVIGIWFTAL). Positions 332, 333, 342, and 344 each coordinate [CaMn4O5] cluster. The propeptide occupies 345-360 (AGEVAPVALTAPAING).

It belongs to the reaction center PufL/M/PsbA/D family. PSII is composed of 1 copy each of membrane proteins PsbA, PsbB, PsbC, PsbD, PsbE, PsbF, PsbH, PsbI, PsbJ, PsbK, PsbL, PsbM, PsbT, PsbX, PsbY, PsbZ, Psb30/Ycf12, peripheral proteins PsbO, CyanoQ (PsbQ), PsbU, PsbV and a large number of cofactors. It forms dimeric complexes. Requires The D1/D2 heterodimer binds P680, chlorophylls that are the primary electron donor of PSII, and subsequent electron acceptors. It shares a non-heme iron and each subunit binds pheophytin, quinone, additional chlorophylls, carotenoids and lipids. D1 provides most of the ligands for the Mn4-Ca-O5 cluster of the oxygen-evolving complex (OEC). There is also a Cl(-1) ion associated with D1 and D2, which is required for oxygen evolution. The PSII complex binds additional chlorophylls, carotenoids and specific lipids. as cofactor. In terms of processing, tyr-161 forms a radical intermediate that is referred to as redox-active TyrZ, YZ or Y-Z. Post-translationally, C-terminally processed by CtpA; processing is essential to allow assembly of the oxygen-evolving complex and thus photosynthetic growth.

The protein resides in the cellular thylakoid membrane. The enzyme catalyses 2 a plastoquinone + 4 hnu + 2 H2O = 2 a plastoquinol + O2. Its function is as follows. Photosystem II (PSII) is a light-driven water:plastoquinone oxidoreductase that uses light energy to abstract electrons from H(2)O, generating O(2) and a proton gradient subsequently used for ATP formation. It consists of a core antenna complex that captures photons, and an electron transfer chain that converts photonic excitation into a charge separation. The D1/D2 (PsbA/PsbD) reaction center heterodimer binds P680, the primary electron donor of PSII as well as several subsequent electron acceptors. This Trichormus variabilis (strain ATCC 29413 / PCC 7937) (Anabaena variabilis) protein is Photosystem II protein D1 2.